A 121-amino-acid polypeptide reads, in one-letter code: uncharacterized protein (121 aa).

The protein to E.coli YcjD and H.influenzae HI_1162.

This is an uncharacterized protein from Haemophilus influenzae (strain ATCC 51907 / DSM 11121 / KW20 / Rd).